The sequence spans 563 residues: Membrane protein insertase YidC (563 aa).

The helical transmembrane segment at 1 to 21 (MDIKRTILIVALAIVTYVGVL) threads the bilayer. A disordered region spans residues 43–62 (APGIPDTAAGTNGSASADVP). 5 consecutive transmembrane segments (helical) span residues 344–364 (LELT…FWLL), 370–390 (ILGN…GLFF), 440–460 (LGGC…YWVL), 471–491 (WILW…PIIM), and 518–538 (PIIF…YWVV).

Belongs to the OXA1/ALB3/YidC family. Type 1 subfamily. In terms of assembly, interacts with the Sec translocase complex via SecD. Specifically interacts with transmembrane segments of nascent integral membrane proteins during membrane integration.

It localises to the cell inner membrane. In terms of biological role, required for the insertion and/or proper folding and/or complex formation of integral membrane proteins into the membrane. Involved in integration of membrane proteins that insert both dependently and independently of the Sec translocase complex, as well as at least some lipoproteins. Aids folding of multispanning membrane proteins. The protein is Membrane protein insertase YidC of Pseudomonas savastanoi pv. phaseolicola (strain 1448A / Race 6) (Pseudomonas syringae pv. phaseolicola (strain 1448A / Race 6)).